The chain runs to 580 residues: Mucolipin-1 (580 aa).

Residues 1 to 38 form a disordered region; sequence MTAPAGPRGSETERLLTPNPGYGTQAGPSPAPPTPPEE. Topologically, residues 1–65 are cytoplasmic; the sequence is MTAPAGPRGS…FRAKGRKPCK (65 aa). The residue at position 10 (S10) is a Phosphoserine. Residues 11–16 carry the Dileucine motif; mediates targeting to lysosomes motif; it reads ETERLL. The tract at residues 42-62 is interaction with phosphoinositides; the sequence is RRRLKYFFMSPCDKFRAKGRK. The helical transmembrane segment at 66–86 threads the bilayer; it reads LMLQVVKILVVTVQLILFGLS. Residues 87 to 298 are Extracellular-facing; it reads NQLAVTFREE…VFQHGDNSFR (212 aa). The tract at residues 107–121 is extracellular/lumenal pore loop; it reads LGYSDGADDTFAAYT. A disulfide bridge links C166 with C192. A glycan (N-linked (GlcNAc...) asparagine) is linked at N230. Cysteines 253 and 284 form a disulfide. The chain crosses the membrane as a helical span at residues 299 to 321; sequence LLFDVVVILTCSLSFLLCARSLL. Topologically, residues 322-350 are cytoplasmic; the sequence is RGFLLQNEFVGFMWRQRGRVISLWERLEF. Residues 351–371 form a helical membrane-spanning segment; the sequence is VNGWYILLVTSDVLTISGTIM. Residues 372 to 382 are Extracellular-facing; the sequence is KIGIEAKNLAS. Residues 383 to 405 traverse the membrane as a helical segment; the sequence is YDVCSILLGTSTLLVWVGVIRYL. The Cytoplasmic portion of the chain corresponds to 406 to 427; that stretch reads TFFHNYNILIATLRVALPSVMR. A helical membrane pass occupies residues 428-448; the sequence is FCCCVAVIYLGYCFCGWIVLG. Topologically, residues 449–456 are extracellular; the sequence is PYHVKFRS. An intramembrane region (pore-forming) is located at residues 457–477; that stretch reads LSMVSECLFSLINGDDMFVTF. The Selectivity filter motif lies at 469 to 474; sequence NGDDMF. The Extracellular portion of the chain corresponds to 478–491; it reads AAMQAQQGRSSLVW. Residues 492–513 traverse the membrane as a helical segment; sequence LFSQLYLYSFISLFIYMVLSLF. Residues 514-580 are Cytoplasmic-facing; sequence IALITGAYDT…PSEEHSLLVN (67 aa). A phosphoserine; by PAK mark is found at S557 and S559. Residues 565–567 form a required for palmitoylation and association with membranes region; that stretch reads CCC. The Dileucine internalization motif; mediates AP2 complex-dependent internalization signature appears at 573–578; the sequence is EEHSLL.

The protein belongs to the transient receptor (TC 1.A.4) family. Polycystin subfamily. MCOLN1 sub-subfamily. Homotetramer. Homooligomer. Can heterooligomerize with MCOLN2 or MCOLN3; heteromeric assemblies have different channel properties as compared to the respective homooligomers and may be tissue-specific. Interacts with PDCD6. Interacts with TMEM163. Interacts with LAPTM4B. Palmitoylated; involved in association with membranes. In terms of processing, phosphorylation by PKA inhibits channel activity. Dephosphorylation increases activity. Post-translationally, proteolytically cleaved probably involving multiple lysosomal proteases including cathepsin B; inhibits lysosomal channel activity. In terms of tissue distribution, widely expressed in adult and fetal tissues.

The protein localises to the late endosome membrane. The protein resides in the lysosome membrane. It is found in the cytoplasmic vesicle membrane. Its subcellular location is the cell projection. It localises to the phagocytic cup. The protein localises to the cytoplasmic vesicle. The protein resides in the phagosome membrane. It is found in the cell membrane. The catalysed reaction is Ca(2+)(in) = Ca(2+)(out). It catalyses the reaction Fe(2+)(in) = Fe(2+)(out). The enzyme catalyses Mg(2+)(in) = Mg(2+)(out). It carries out the reaction K(+)(in) = K(+)(out). The catalysed reaction is Na(+)(in) = Na(+)(out). Channel activity is controlled by multiple regulatory mechanisms in different subcellular compartments. Channel function is transiently modulated by changes in Ca(2+) in a pH-dependent manner; pH changes modify the aggregation state of unitary channels; a negative cooperativity between extracellular/lumenal Ca(2+) and H(+) is suggested. Regulated by phosphoinositides in a compartment-specific manner: in lysosomes activated by PtdIns(3,5)P2 (Phosphatidylinositol 3,5-bisphosphate) and at the plasma membrane inhibited by PtdIns(4,5)P2 (Phosphatidylinositol 4,5-bisphosphate). Its function is as follows. Nonselective cation channel probably playing a role in the regulation of membrane trafficking events and of metal homeostasis. Acts as a Ca(2+)-permeable cation channel with inwardly rectifying activity. Proposed to play a major role in Ca(2+) release from late endosome and lysosome vesicles to the cytoplasm, which is important for many lysosome-dependent cellular events, including the fusion and trafficking of these organelles, exocytosis and autophagy. Required for efficient uptake of large particles in macrophages in which Ca(2+) release from the lysosomes triggers lysosomal exocytosis. May also play a role in phagosome-lysosome fusion. Involved in lactosylceramide trafficking indicative for a role in the regulation of late endocytic membrane fusion/fission events. By mediating lysosomal Ca(2+) release is involved in regulation of mTORC1 signaling and in mTOR/TFEB-dependent lysosomal adaptation to environmental cues such as nutrient levels. Seems to act as lysosomal active oxygen species (ROS) sensor involved in ROS-induced TFEB activation and autophagy. Also functions as a Fe(2+) permeable channel in late endosomes and lysosomes. Also permeable to Mg(2+), Na(+). K(+) and Cs(+). Proposed to play a role in zinc homeostasis probably implicating its association with TMEM163 In adaptive immunity, TRPML2 and TRPML1 may play redundant roles in the function of the specialized lysosomes of B cells. In terms of biological role, may contribute to cellular lipase activity within the late endosomal pathway or at the cell surface which may be involved in processes of membrane reshaping and vesiculation, especially the growth of tubular structures. However, it is not known, whether it conveys the enzymatic activity directly, or merely facilitates the activity of an associated phospholipase. This Homo sapiens (Human) protein is Mucolipin-1.